We begin with the raw amino-acid sequence, 355 residues long: Alanine racemase (355 aa).

Lysine 34 functions as the Proton acceptor; specific for D-alanine in the catalytic mechanism. N6-(pyridoxal phosphate)lysine is present on lysine 34. Arginine 133 lines the substrate pocket. Catalysis depends on tyrosine 249, which acts as the Proton acceptor; specific for L-alanine. Position 297 (methionine 297) interacts with substrate.

Belongs to the alanine racemase family. Pyridoxal 5'-phosphate serves as cofactor.

It catalyses the reaction L-alanine = D-alanine. It participates in amino-acid biosynthesis; D-alanine biosynthesis; D-alanine from L-alanine: step 1/1. Functionally, catalyzes the interconversion of L-alanine and D-alanine. May also act on other amino acids. This chain is Alanine racemase (alr), found in Rickettsia peacockii (strain Rustic).